We begin with the raw amino-acid sequence, 61 residues long: Conotoxin Am14.1 (61 aa).

Propeptides lie at residues 1-19 (MLSV…HLPR) and 52-61 (KRDLDLFTDQ).

In terms of processing, mostly non-hydroxylated. Contains 2 disulfide bonds. As to expression, expressed by the venom duct.

Its subcellular location is the secreted. Its function is as follows. Probable toxin that inhibits ion channels. The chain is Conotoxin Am14.1 from Conus amadis (Amadis cone).